A 291-amino-acid polypeptide reads, in one-letter code: N-acetylmannosamine kinase (291 aa).

Residues 5–12 (AIDIGGTK) and 132–139 (GVGGGVVS) each bind ATP. Zn(2+) is bound by residues His-156, Cys-166, Cys-168, and Cys-173.

It belongs to the ROK (NagC/XylR) family. NanK subfamily. In terms of assembly, homodimer.

It carries out the reaction an N-acyl-D-mannosamine + ATP = an N-acyl-D-mannosamine 6-phosphate + ADP + H(+). It functions in the pathway amino-sugar metabolism; N-acetylneuraminate degradation; D-fructose 6-phosphate from N-acetylneuraminate: step 2/5. In terms of biological role, catalyzes the phosphorylation of N-acetylmannosamine (ManNAc) to ManNAc-6-P. In Escherichia coli (strain SE11), this protein is N-acetylmannosamine kinase.